Reading from the N-terminus, the 434-residue chain is MRSTRNSFACLCIMLFGMLFVPFTLRAEEVGEYIAIRKEGASRIAVVLDKTSADGGKQREWARSLDVTINKGLDFTGLFNLLPAPLNIRNGQNGGLNFASIASVGGDIYAGGSVTKRSGRPVLEMHVYDSSGKSLLARTYTGEESQLRAIGLRFCADLVELLTGKRSVFGTRIVFVANRTGNKEIYMCDFDGENVVQLTNSRSISLTPAVSPDGTYIAWTDYTSGKPNLYIKNIATGAKVSVNKHGVCISPAWRPGTNTLVTTLSYEGDQDLYLIRADGTVERRLTKGGGIDVSPTFSPDGSKMAFVSTRQGGPQIFIQDMNSGQVRRLTYSGIYNTQPSWSPNGDKILYSSMQKSGEINIFSINVDGSGLLQLTSGSGNNEHPSWSPDGSMIVFSSTRDGRRRLYVMNADGSNQRPLLNMQGEQQQPSWSVSK.

The first 27 residues, 1-27, serve as a signal peptide directing secretion; that stretch reads MRSTRNSFACLCIMLFGMLFVPFTLRA. Residues 413 to 434 form a disordered region; sequence SNQRPLLNMQGEQQQPSWSVSK.

This sequence belongs to the TolB family.

The protein localises to the periplasm. The chain is Protein TolB homolog from Chlorobaculum tepidum (strain ATCC 49652 / DSM 12025 / NBRC 103806 / TLS) (Chlorobium tepidum).